Consider the following 70-residue polypeptide: Melittin-N (70 aa).

Residues 1-21 (MKFLVNVALVFMVVYISYIYA) form the signal peptide. Residues 22–43 (APEPEPAPEPEAEADAEADPEA) constitute a propeptide, removed by a dipeptidylpeptidase. Residue glycine 44 is modified to N-formylglycine; partial. Glutamine 69 carries the glutamine amide modification.

This sequence belongs to the melittin family. As to quaternary structure, monomer (in solution and for integration into membranes), homotetramer (in solution and potentially as a toroidal pore in membranes), and potenially homomultimer (as a toroidal pore in membranes). In terms of tissue distribution, expressed by the venom gland.

The protein resides in the secreted. The protein localises to the target cell membrane. In terms of biological role, main toxin of bee venom with strong hemolytic activity and antimicrobial activity. It has enhancing effects on bee venom phospholipase A2 activity. This amphipathic toxin binds to negatively charged membrane surface and forms pore by inserting into lipid bilayers inducing the leakage of ions and molecules and the enhancement of permeability that ultimately leads to cell lysis. It acts as a voltage-gated pore with higher selectivity for anions over cations. The ion conductance has been shown to be voltage-dependent. Self-association of melittin in membranes is promoted by high ionic strength, but not by the presence of negatively charged lipids. In vivo, intradermal injection into healthy human volunteers produce sharp pain sensation and an inflammatory response. It produces pain by activating primary nociceptor cells directly and indirectly due to its ability to activate plasma membrane phospholipase A2 and its pore-forming activity. Shows lower cytotoxicity when tested on E.coli and cancer cell lines than melittin, as well as lower anti-inflammatory properties and lower properties to interact to small unilamellar liposomes. The protein is Melittin-N (MELT) of Apis cerana (Indian honeybee).